The following is a 667-amino-acid chain: Probable potassium transport system protein Kup (667 aa).

The next 12 helical transmembrane spans lie at 5 to 25 (GLLI…LYVM), 47 to 67 (ISLI…IIAL), 88 to 108 (AAWL…DGTL), 133 to 153 (VSNQ…LFSI), 164 to 184 (AFGP…LINI), 210 to 230 (AGFA…ALYS), 243 to 263 (SWPF…VWIL), 287 to 307 (LASI…LITG), 336 to 356 (IYIP…VLFF), 367 to 387 (GLSI…WLVL), 393 to 413 (LANL…MGSS), and 420 to 440 (GGYV…VWYF).

It belongs to the HAK/KUP transporter (TC 2.A.72) family.

It localises to the cell membrane. The catalysed reaction is K(+)(in) + H(+)(in) = K(+)(out) + H(+)(out). Its function is as follows. Transport of potassium into the cell. Likely operates as a K(+):H(+) symporter. The sequence is that of Probable potassium transport system protein Kup from Lactobacillus delbrueckii subsp. bulgaricus (strain ATCC 11842 / DSM 20081 / BCRC 10696 / JCM 1002 / NBRC 13953 / NCIMB 11778 / NCTC 12712 / WDCM 00102 / Lb 14).